A 474-amino-acid chain; its full sequence is Transcription factor fscB (474 aa).

2 disordered regions span residues 114-153 (VDEL…SYWT) and 207-242 (GKEV…NPAP). Residues 120 to 131 (SSDTRSSLSPSS) are compositionally biased toward low complexity. The span at 132 to 153 (HNTTTGHETGLSSVTPPQSYWT) shows a compositional bias: polar residues. Residues 207–221 (GKEVTKRNKRSRTEA) are compositionally biased toward basic and acidic residues. Residues 222-240 (QEASNSPCASSTADSQTNP) are compositionally biased toward polar residues.

Belongs to the POU transcription factor family. Class-3 subfamily.

It localises to the nucleus. Functionally, transcription factor; part of the fragmented gene cluster that mediates the biosynthesis of fusarochromene, a tryptophan-derived metabolite closely related to a group of mycotoxins including fusarochromanone. The protein is Transcription factor fscB of Fusarium equiseti (Fusarium scirpi).